A 154-amino-acid chain; its full sequence is Myoglobin (154 aa).

Positions 2-148 (GLSDGEWQLV…FRNDMAAKYK (147 aa)) constitute a Globin domain. The residue at position 4 (S4) is a Phosphoserine. H65 serves as a coordination point for nitrite. O2 is bound at residue H65. T68 is modified (phosphothreonine). A heme b-binding site is contributed by H94.

Belongs to the globin family. Monomeric.

Its subcellular location is the cytoplasm. It is found in the sarcoplasm. It catalyses the reaction Fe(III)-heme b-[protein] + nitric oxide + H2O = Fe(II)-heme b-[protein] + nitrite + 2 H(+). It carries out the reaction H2O2 + AH2 = A + 2 H2O. Its function is as follows. Monomeric heme protein which primary function is to store oxygen and facilitate its diffusion within muscle tissues. Reversibly binds oxygen through a pentacoordinated heme iron and enables its timely and efficient release as needed during periods of heightened demand. Depending on the oxidative conditions of tissues and cells, and in addition to its ability to bind oxygen, it also has a nitrite reductase activity whereby it regulates the production of bioactive nitric oxide. Under stress conditions, like hypoxia and anoxia, it also protects cells against reactive oxygen species thanks to its pseudoperoxidase activity. The protein is Myoglobin (MB) of Lagothrix lagotricha (Brown woolly monkey).